The chain runs to 159 residues: Protein Smg homolog (159 aa).

Belongs to the Smg family.

This is Protein Smg homolog from Dichelobacter nodosus (strain VCS1703A).